The chain runs to 1099 residues: R3H domain-containing protein 1 (1099 aa).

A disordered region spans residues 111–146; the sequence is SFEKEEKPSKDEAEKEKASDKLPRKMLSRDSSQEYT. Residues 112–142 are compositionally biased toward basic and acidic residues; the sequence is FEKEEKPSKDEAEKEKASDKLPRKMLSRDSS. The R3H domain maps to 168-231; the sequence is RMMLLKLEQE…SVIVNKTSNT (64 aa). 2 positions are modified to phosphoserine: Ser187 and Ser262. An SUZ domain is found at 232–302; that stretch reads RIPDQKFNEH…ARDRIFSQDS (71 aa). The disordered stretch occupies residues 267–287; that stretch reads DNQMRIRLKDDRRSKSIEERE. Position 302 is a phosphoserine (Ser302). Positions 331 to 370 are disordered; it reads RVNKDASGRSTNSHQSSTENELKYSEPRPWSSTDSDSSLR. 2 stretches are compositionally biased toward polar residues: residues 338 to 349 and 360 to 370; these read GRSTNSHQSSTE and WSSTDSDSSLR. Phosphoserine is present on residues Ser380, Ser381, and Ser393. 4 disordered regions span residues 387–439, 490–537, 583–625, and 797–825; these read VLTR…SSHG, QTGQ…AANH, YIMT…HPVS, and EQVQ…PPPP. A compositionally biased stretch (low complexity) spans 391–422; sequence GDSSGSSKSIGRLSKTGSESSGSVGSSTGSLS. Composition is skewed to pro residues over residues 519–532 and 588–611; these read PGPP…PPQQ and APPP…PGQP. Residues 797–817 are compositionally biased toward polar residues; it reads EQVQFPRTTSPCSSQQLQGHQ. Arg929 carries the asymmetric dimethylarginine; alternate modification. Omega-N-methylarginine; alternate is present on Arg929. Residues 941-977 are disordered; the sequence is PPAVLHGHIPNQQGQPGSRHGNRGRRQAKKAASTDLG. Residues 960–969 are compositionally biased toward basic residues; it reads HGNRGRRQAK. Position 973 is a phosphoserine (Ser973).

The polypeptide is R3H domain-containing protein 1 (R3HDM1) (Homo sapiens (Human)).